A 428-amino-acid chain; its full sequence is Adenylosuccinate synthetase (428 aa).

GTP is bound by residues 11–17 (GDEGKGK) and 39–41 (GHT). Residue D12 is the Proton acceptor of the active site. Mg(2+) contacts are provided by D12 and G39. Residues 12–15 (DEGK), 37–40 (NAGH), T130, R144, N226, T241, and R305 contribute to the IMP site. H40 acts as the Proton donor in catalysis. Residue 301-307 (VTTGRKR) coordinates substrate. Residues R307, 333 to 335 (KLD), and 415 to 417 (GTG) contribute to the GTP site.

The protein belongs to the adenylosuccinate synthetase family. Homodimer. Requires Mg(2+) as cofactor.

It localises to the cytoplasm. It catalyses the reaction IMP + L-aspartate + GTP = N(6)-(1,2-dicarboxyethyl)-AMP + GDP + phosphate + 2 H(+). Its pathway is purine metabolism; AMP biosynthesis via de novo pathway; AMP from IMP: step 1/2. Its function is as follows. Plays an important role in the de novo pathway and in the salvage pathway of purine nucleotide biosynthesis. Catalyzes the first committed step in the biosynthesis of AMP from IMP. The chain is Adenylosuccinate synthetase from Candida dubliniensis (strain CD36 / ATCC MYA-646 / CBS 7987 / NCPF 3949 / NRRL Y-17841) (Yeast).